The following is a 319-amino-acid chain: tRNA-cytidine(32) 2-sulfurtransferase (319 aa).

Residues 43 to 48 (SGGKDS) carry the PP-loop motif motif. Residues Cys-118, Cys-121, and Cys-209 each contribute to the [4Fe-4S] cluster site.

This sequence belongs to the TtcA family. As to quaternary structure, homodimer. It depends on Mg(2+) as a cofactor. [4Fe-4S] cluster serves as cofactor.

Its subcellular location is the cytoplasm. The enzyme catalyses cytidine(32) in tRNA + S-sulfanyl-L-cysteinyl-[cysteine desulfurase] + AH2 + ATP = 2-thiocytidine(32) in tRNA + L-cysteinyl-[cysteine desulfurase] + A + AMP + diphosphate + H(+). It participates in tRNA modification. Functionally, catalyzes the ATP-dependent 2-thiolation of cytidine in position 32 of tRNA, to form 2-thiocytidine (s(2)C32). The sulfur atoms are provided by the cysteine/cysteine desulfurase (IscS) system. The polypeptide is tRNA-cytidine(32) 2-sulfurtransferase (Neisseria gonorrhoeae (strain NCCP11945)).